Here is a 315-residue protein sequence, read N- to C-terminus: Ornithine carbamoyltransferase, anabolic (315 aa).

Carbamoyl phosphate-binding positions include 57–60, Gln84, Arg108, and 135–138; these read STRT and HPCQ. L-ornithine contacts are provided by residues Asn166, Asp230, and 234 to 235; that span reads SM. Carbamoyl phosphate contacts are provided by residues 270–271 and Arg298; that span reads CL.

Belongs to the aspartate/ornithine carbamoyltransferase superfamily. OTCase family. In terms of assembly, homododecamer (tetramer of trimers).

It localises to the cytoplasm. It catalyses the reaction carbamoyl phosphate + L-ornithine = L-citrulline + phosphate + H(+). The protein operates within amino-acid biosynthesis; L-arginine biosynthesis; L-arginine from L-ornithine and carbamoyl phosphate: step 1/3. Inhibited by the bisubstrate delta-N-phosphonoacetyl-L-ornithine (PALO). In terms of biological role, reversibly catalyzes the transfer of the carbamoyl group from carbamoyl phosphate (CP) to the N(epsilon) atom of ornithine (ORN) to produce L-citrulline, which is a substrate for argininosuccinate synthetase, the enzyme involved in the final step in arginine biosynthesis. The protein is Ornithine carbamoyltransferase, anabolic of Pyrococcus furiosus (strain ATCC 43587 / DSM 3638 / JCM 8422 / Vc1).